Here is a 630-residue protein sequence, read N- to C-terminus: Neuronal acetylcholine receptor subunit alpha-4 (630 aa).

The first 30 residues, 1 to 30 (MANSGTGAPPPLLLLPLLLLLGTGLLPASS), serve as a signal peptide directing secretion. The Extracellular portion of the chain corresponds to 32 to 249 (IETRAHAEER…IIRRLPLFYT (218 aa)). Asn-59 carries N-linked (GlcNAc...) asparagine glycosylation. Ca(2+) is bound by residues Val-78 and Glu-80. N-linked (GlcNAc...) asparagine glycans are attached at residues Asn-109 and Asn-176. 2 cysteine pairs are disulfide-bonded: Cys-163–Cys-177 and Cys-227–Cys-228. Residues 250–270 (INLIIPCLLISCLTVLVFYLP) traverse the membrane as a helical segment. Cys-273 is lipidated: S-palmitoyl cysteine. 2 helical membrane passes run 279–299 (LCIS…EIIP) and 313–333 (LLFT…VLNV). The Cytoplasmic portion of the chain corresponds to 334–604 (HHRSPRTHTM…WKYVAMVIDR (271 aa)). 2 disordered regions span residues 418–463 (TAVE…SGAP) and 505–526 (SLAD…SQLP). Ser-428 is subject to Phosphoserine. Over residues 434 to 443 (PDLKTSEVEK) the composition is skewed to basic and acidic residues. Positions 447 to 457 (CPSPGSCPPPK) are enriched in pro residues. Residues Ser-542 and Ser-545 each carry the phosphoserine modification. The chain crosses the membrane as a helical span at residues 605–625 (IFLWMFIIVCLLGTVGLFLPP).

The protein belongs to the ligand-gated ion channel (TC 1.A.9) family. Acetylcholine receptor (TC 1.A.9.1) subfamily. Alpha-4/CHRNA4 sub-subfamily. As to quaternary structure, neuronal AChR is composed of two different types of subunits: alpha and beta. CHRNA4 forms heteropentameric neuronal acetylcholine receptors with CHRNB2 and CHRNB4, as well as CHRNA5 and CHRNB3 as accesory subunits. Found in two major stoichiometric forms, LS (low agonist sensitivity): (CHRNA4)3:(CHRNB2)2 and HS (high agonist sensitivity): (CHRNA4)2:(CHRNB2)3, the two stoichiometric forms differ in their unitary conductance, calcium permeability, ACh sensitivity and potentiation by divalent cation. Cells produce predominantly an (CHRNA4)3:(CHRNB2)2 nAChR. The (CHRNA4)2:(CHRNB2)3 expression is selectively up-regulated by nicotine and has lower single channel conductance and calcium permeability. In the striatum, also forms CHRNA4:CHRNA6:CHRNB2 complexes. Also found in the stoichiometric form: (CHRNA4:CHRNB2)2:CHRNB3. Interacts with RIC3; which is required for proper folding and assembly. Interacts with LYPD6. In terms of tissue distribution, in various regions of the central nervous system. Expressed in hippocampal neurons.

It is found in the presynaptic cell membrane. It localises to the cell membrane. The catalysed reaction is Ca(2+)(in) = Ca(2+)(out). The enzyme catalyses K(+)(in) = K(+)(out). It carries out the reaction Na(+)(in) = Na(+)(out). Activated by a myriad of ligands such as acetylcholine, cytisine, nicotine, choline and epibatidine. Channel potentiation by calcium is stoichiometry-selective, CHRNA4:CHRNB2 nACh receptor is achieved by calcium association with topographically distinct sites framed by anionic residues within the CHRNA4 subunit and between the CHRNA4 and CHRNB2 subunits. nAChR activity is inhibited by the antagonist alpha-conotoxins BuIA, PnIA, GID and MII, small disulfide-constrained peptides from cone snails. Component of neuronal acetylcholine receptors (nAChRs) that function as pentameric, ligand-gated cation channels with high calcium permeability among other activities. nAChRs are excitatory neurotrasnmitter receptors formed by a collection of nAChR subunits known to mediate synaptic transmission in the nervous system and the neuromuscular junction. Each nAchR subunit confers differential attributes to channel properties, including activation, deactivation and desensitization kinetics, pH sensitivity, cation permeability, and binding to allosteric modulators. CHRNA4 forms heteropentameric neuronal acetylcholine receptors with CHRNB2 and CHRNB4, as well as CHRNA5 and CHRNB3 as accesory subunits. Is the most abundant nAChR subtype expressed in the central nervous system. Found in two major stoichiometric forms,(CHRNA4)3:(CHRNB2)2 and (CHRNA4)2:(CHRNB2)3, the two stoichiometric forms differ in their unitary conductance, calcium permeability, ACh sensitivity and potentiation by divalent cation. Involved in the modulation of calcium-dependent signaling pathways, influences the release of neurotransmitters, including dopamine, glutamate and GABA. This Rattus norvegicus (Rat) protein is Neuronal acetylcholine receptor subunit alpha-4 (Chrna4).